Reading from the N-terminus, the 565-residue chain is Thiol:disulfide interchange protein DsbD (565 aa).

Residues 1–19 form the signal peptide; it reads MAQRIFTLILLLCSTSVFA. Over 20-162 the chain is Periplasmic; sequence GLFDAPGRSQ…VPQQEQPTAQ (143 aa). 2 cysteine pairs are disulfide-bonded: Cys122/Cys128 and Cys182/Cys304. The chain crosses the membrane as a helical span at residues 163–183; that stretch reads LPFSALWALLIGIGIAFTPCV. Over 184 to 207 the chain is Cytoplasmic; that stretch reads LPMYPLISGIVLGGKQRLSTARAL. The helical transmembrane segment at 208-228 threads the bilayer; it reads LLTFIYVQGMALTYTALGLVV. At 229-242 the chain is on the periplasmic side; that stretch reads AAAGLQFQAALQHP. The chain crosses the membrane as a helical span at residues 243–263; sequence YVLIGLTIVFTLLAMSMFGLL. Topologically, residues 264–295 are cytoplasmic; sequence TLQLPSSLQTRLTLMSNRQQGGSPGGVFIMGT. A helical transmembrane segment spans residues 296 to 316; sequence IAGLICSPCTTAPLSAILLYI. Residues 317-322 are Periplasmic-facing; it reads AQSGNM. A helical transmembrane segment spans residues 323-343; the sequence is WLGGGTLYLYALGMGLPLMLI. The Cytoplasmic segment spans residues 344 to 356; the sequence is TVFGNRLLPKSGP. Residues 357–377 traverse the membrane as a helical segment; sequence WMEQVKTAFGFVILALPVFLL. Residues 378 to 383 lie on the Periplasmic side of the membrane; sequence ERVIGD. The chain crosses the membrane as a helical span at residues 384-404; sequence VWGLRLWSALGVAFFGWAFIT. Over 405 to 417 the chain is Cytoplasmic; the sequence is SLQAKRGWMRVVQ. Residues 418-438 traverse the membrane as a helical segment; the sequence is IILLAAALVSVRPLQDWAFGA. The Thioredoxin domain maps to 434–565; the sequence is WAFGATHTAQ…FSAHLRDRQP (132 aa). The Periplasmic portion of the chain corresponds to 439-565; the sequence is THTAQTQTHL…FSAHLRDRQP (127 aa). The cysteines at positions 480 and 483 are disulfide-linked.

This sequence belongs to the thioredoxin family. DsbD subfamily.

The protein localises to the cell inner membrane. It carries out the reaction [protein]-dithiol + NAD(+) = [protein]-disulfide + NADH + H(+). The enzyme catalyses [protein]-dithiol + NADP(+) = [protein]-disulfide + NADPH + H(+). Functionally, required to facilitate the formation of correct disulfide bonds in some periplasmic proteins and for the assembly of the periplasmic c-type cytochromes. Acts by transferring electrons from cytoplasmic thioredoxin to the periplasm. This transfer involves a cascade of disulfide bond formation and reduction steps. In Escherichia coli O157:H7, this protein is Thiol:disulfide interchange protein DsbD.